A 309-amino-acid polypeptide reads, in one-letter code: MGTKIIGTGVYLPKNVLTNFDLEKIVDTSDEWITTRTGIKERRIAKEETITYMATQAAKEALREANLSPEELDLIILATLTPQKRFPSTACLVQAQLKAKGVYAFDISAACSGFIYALDIADSFIKSGKAKNVLVIGAEKLSEAVDWEDRSTCVLFGDGAGAVVVTRSEDKSDILATRMYAEGSLEELLHADNCGYIRMKGRELFKVAVRSMEEVCREVLEKAGVKPEEVSLVIPHQANVRIINALAEKLNIPKEKVFVNIQKYGNTSAASIPIALHEAIKEGKVKRGDLILMTAMGGGLTWGAVLLRY.

Catalysis depends on residues Cys-111 and His-236. The tract at residues 237–241 is ACP-binding; the sequence is QANVR. Asn-266 is an active-site residue.

The protein belongs to the thiolase-like superfamily. FabH family. Homodimer.

It localises to the cytoplasm. It carries out the reaction malonyl-[ACP] + acetyl-CoA + H(+) = 3-oxobutanoyl-[ACP] + CO2 + CoA. It participates in lipid metabolism; fatty acid biosynthesis. In terms of biological role, catalyzes the condensation reaction of fatty acid synthesis by the addition to an acyl acceptor of two carbons from malonyl-ACP. Catalyzes the first condensation reaction which initiates fatty acid synthesis and may therefore play a role in governing the total rate of fatty acid production. Possesses both acetoacetyl-ACP synthase and acetyl transacylase activities. Its substrate specificity determines the biosynthesis of branched-chain and/or straight-chain of fatty acids. This chain is Beta-ketoacyl-[acyl-carrier-protein] synthase III, found in Aquifex aeolicus (strain VF5).